The following is a 293-amino-acid chain: tRNA pseudouridine synthase A (293 aa).

The active-site Nucleophile is the aspartate 60. Residue tyrosine 118 coordinates substrate.

The protein belongs to the tRNA pseudouridine synthase TruA family. Homodimer.

It carries out the reaction uridine(38/39/40) in tRNA = pseudouridine(38/39/40) in tRNA. In terms of biological role, formation of pseudouridine at positions 38, 39 and 40 in the anticodon stem and loop of transfer RNAs. This chain is tRNA pseudouridine synthase A, found in Rippkaea orientalis (strain PCC 8801 / RF-1) (Cyanothece sp. (strain PCC 8801)).